Reading from the N-terminus, the 95-residue chain is Citrate lyase acyl carrier protein (95 aa).

The residue at position 14 (serine 14) is an O-(phosphoribosyl dephospho-coenzyme A)serine.

It belongs to the CitD family. Oligomer with a subunit composition of (alpha,beta,gamma)6.

It localises to the cytoplasm. Functionally, covalent carrier of the coenzyme of citrate lyase. This Haemophilus influenzae (strain PittEE) protein is Citrate lyase acyl carrier protein.